The sequence spans 448 residues: Tryptophan dimethylallyltransferase 1 (448 aa).

L-tryptophan contacts are provided by residues Ile-80–Leu-81 and Glu-89. The substrate site is built by Arg-100, Lys-186, and Tyr-188. Residues Tyr-190 and Arg-251 each coordinate L-tryptophan. Positions 264, 266, 268, 350, 352, 416, and 420 each coordinate substrate.

It belongs to the tryptophan dimethylallyltransferase family. As to quaternary structure, homodimer.

The enzyme catalyses L-tryptophan + dimethylallyl diphosphate = 4-(3-methylbut-2-enyl)-L-tryptophan + diphosphate. It participates in alkaloid biosynthesis; ergot alkaloid biosynthesis. Functionally, catalyzes the first step of ergot alkaloid biosynthesis. Ergot alkaloids, which are produced by endophyte fungi, can enhance plant host fitness, but also cause livestock toxicosis to host plants. The polypeptide is Tryptophan dimethylallyltransferase 1 (dmaW1) (Epichloe coenophiala (Tall fescue endophyte fungus)).